The sequence spans 131 residues: Peptide methionine sulfoxide reductase MsrB (131 aa).

Positions 8–130 constitute a MsrB domain; it reads LEEWRAMLDP…NSVCLDLKPR (123 aa). Zn(2+) contacts are provided by cysteine 47, cysteine 50, cysteine 96, and cysteine 99. Cysteine 119 functions as the Nucleophile in the catalytic mechanism.

This sequence belongs to the MsrB Met sulfoxide reductase family. Requires Zn(2+) as cofactor.

The enzyme catalyses L-methionyl-[protein] + [thioredoxin]-disulfide + H2O = L-methionyl-(R)-S-oxide-[protein] + [thioredoxin]-dithiol. The polypeptide is Peptide methionine sulfoxide reductase MsrB (Pseudomonas entomophila (strain L48)).